A 108-amino-acid polypeptide reads, in one-letter code: UPF0145 protein gll1048 (108 aa).

This sequence belongs to the UPF0145 family.

The chain is UPF0145 protein gll1048 from Gloeobacter violaceus (strain ATCC 29082 / PCC 7421).